The primary structure comprises 363 residues: Lovastatin nonaketide synthase, enoyl reductase component lovC (363 aa).

NADP(+)-binding positions include 51-54, 174-177, 197-200, Tyr-215, 262-263, Thr-280, and 351-352; these read SDTK, STAT, SPHN, LN, and LS. Residues 226–272 form a lovB-binding region; the sequence is TYTKNNLRYALDCITNVESTTFCFAAIGRAGGHYVSLNPFPEHAATR.

Belongs to the zinc-containing alcohol dehydrogenase family. As to quaternary structure, each MAT domain from the lovB homodimer binds one lovC molecule to form the final active lovB-lovC megasynthase complex.

The catalysed reaction is holo-[lovastatin nonaketide synthase] + 9 malonyl-CoA + S-adenosyl-L-methionine + 11 NADPH + 19 H(+) = dihydromonacolin L-[lovastatin nonaketide synthase] + S-adenosyl-L-homocysteine + 9 CO2 + 11 NADP(+) + 9 CoA + 6 H2O. It functions in the pathway polyketide biosynthesis; lovastatin biosynthesis. Functionally, trans-enoyl reductase; part of the gene cluster that mediates the biosynthesis of lovastatin (also known as mevinolin, mevacor or monacolin K), a hypolipidemic inhibitor of (3S)-hydroxymethylglutaryl-coenzyme A (HMG-CoA) reductase (HMGR). The first step in the biosynthesis of lovastatin is the production of dihydromonacolin L acid (DML) by the lovastatin nonaketide synthase lovB and the trans-acting enoyl reductase lovC (called the lovB-lovC megasynthase complex) via condensation of one acetyl-CoA unit and 8 malonyl-CoA units. The formation of the LovB/C complex is essential for the integrity of the catalytic chamber to the complete total synthesis of DML acid. Dihydromonacolin L acid is released from lovB by the thioesterase lovG. Next, dihydromonacolin L acid is oxidized by the dihydromonacolin L monooxygenase lovA twice to form monacolin J acid. The 2-methylbutyrate moiety of lovastatin is synthesized by the lovastatin diketide synthase lovF via condensation of one acetyl-CoA unit and one malonyl-CoA unit. Finally, the covalent attachment of this moiety to monacolin J acid is catalyzed by the transesterase lovD to yield lovastatin. LovD has broad substrate specificity and can also convert monacolin J to simvastatin using alpha-dimethylbutanoyl-S-methyl-3-mercaptopropionate (DMB-S-MMP) as the thioester acyl donor, and can also catalyze the reverse reaction and function as hydrolase in vitro. LovD has much higher activity with LovF-bound 2-methylbutanoate than with free diketide substrates. This Aspergillus terreus protein is Lovastatin nonaketide synthase, enoyl reductase component lovC.